Here is a 181-residue protein sequence, read N- to C-terminus: MARLKDKYLNEVQPNLMQKFGYKNIMQVPKLEKVIINIGLGEAVQNSKAVDAAVGDLMAITGQRPITTKAKKSIAAFKLRAGMTIGTKVTLRGERMYEFVDRLFNVALPRVRDFRGISDKSFDGRGNYTMGLKEQLIFPEIEYDKIDKVRGMDITFVTTAKTDEEARELLKLMGIPFVKVS.

It belongs to the universal ribosomal protein uL5 family. As to quaternary structure, part of the 50S ribosomal subunit; part of the 5S rRNA/L5/L18/L25 subcomplex. Contacts the 5S rRNA and the P site tRNA. Forms a bridge to the 30S subunit in the 70S ribosome.

Functionally, this is one of the proteins that bind and probably mediate the attachment of the 5S RNA into the large ribosomal subunit, where it forms part of the central protuberance. In the 70S ribosome it contacts protein S13 of the 30S subunit (bridge B1b), connecting the 2 subunits; this bridge is implicated in subunit movement. Contacts the P site tRNA; the 5S rRNA and some of its associated proteins might help stabilize positioning of ribosome-bound tRNAs. The polypeptide is Large ribosomal subunit protein uL5 (Desulforamulus reducens (strain ATCC BAA-1160 / DSM 100696 / MI-1) (Desulfotomaculum reducens)).